We begin with the raw amino-acid sequence, 395 residues long: Endophilin-B2 (395 aa).

Methionine 1 is subject to N-acetylmethionine. The tract at residues 1–27 (MDFNMKKLASDAGIFFTRAVQFTEEKF) is membrane-binding amphipathic helix. Serine 10 is modified (phosphoserine). In terms of domain architecture, BAR spans 24–287 (EEKFGQAEKT…LGRFPGTFVG (264 aa)). 2 coiled-coil regions span residues 116 to 132 (IKVA…ERDF) and 206 to 240 (ASAL…LLLE). In terms of domain architecture, SH3 spans 335-395 (SGTRKARVLY…VPVTYLELLS (61 aa)). Phosphoserine is present on serine 395.

This sequence belongs to the endophilin family. As to quaternary structure, homodimer, and heterodimer with SH3GLB1.

The protein resides in the cytoplasm. The chain is Endophilin-B2 (SH3GLB2) from Bos taurus (Bovine).